The sequence spans 347 residues: NADH-ubiquinone oxidoreductase chain 2 (347 aa).

10 helical membrane passes run 1 to 21 (MNPSIFIILLTTLILGTMMVI), 25 to 45 (HWLLAWIGFEMNMMAFIPIMM), 59 to 79 (YLLTQATASALLMMAVIINLM), 96 to 116 (TLMTVALAIKLGLAPFHFWVP), 122 to 142 (IPLTTGLILLTWQKLAPLSIL), 149 to 169 (INLYLMLTMSLLSILVGGWGG), 200 to 220 (LTLLNLLIYITMTFTMFMLFI), 239 to 259 (IITTLTMLTLLSMGGLPPLSG), 274 to 294 (DILIMPTFMAITALLNLYFYM), and 325 to 345 (LLPTAIVISTMLLPLTPMLSI).

Belongs to the complex I subunit 2 family. In terms of assembly, core subunit of respiratory chain NADH dehydrogenase (Complex I) which is composed of 45 different subunits. Interacts with TMEM242.

The protein localises to the mitochondrion inner membrane. It carries out the reaction a ubiquinone + NADH + 5 H(+)(in) = a ubiquinol + NAD(+) + 4 H(+)(out). Core subunit of the mitochondrial membrane respiratory chain NADH dehydrogenase (Complex I) which catalyzes electron transfer from NADH through the respiratory chain, using ubiquinone as an electron acceptor. Essential for the catalytic activity and assembly of complex I. This is NADH-ubiquinone oxidoreductase chain 2 from Balaenoptera musculus (Blue whale).